A 237-amino-acid polypeptide reads, in one-letter code: Sugar fermentation stimulation protein homolog (237 aa).

Belongs to the SfsA family.

The chain is Sugar fermentation stimulation protein homolog from Pseudomonas putida (strain ATCC 700007 / DSM 6899 / JCM 31910 / BCRC 17059 / LMG 24140 / F1).